The primary structure comprises 548 residues: CTP synthase (548 aa).

The interval 1-265 (MTRYIFVTGG…DDIICDKLRI (265 aa)) is amidoligase domain. Position 13 (S13) interacts with CTP. S13 is a binding site for UTP. ATP-binding positions include 14–19 (SLGKGI) and D71. Mg(2+) is bound by residues D71 and E139. CTP is bound by residues 146 to 148 (DIE), 186 to 191 (KTKPTQ), and K222. Residues 186 to 191 (KTKPTQ) and K222 each bind UTP. The region spanning 290 to 541 (NIAMVGKYME…VNAALAYKAA (252 aa)) is the Glutamine amidotransferase type-1 domain. Residue G351 participates in L-glutamine binding. Catalysis depends on C378, which acts as the Nucleophile; for glutamine hydrolysis. L-glutamine-binding positions include 379–382 (LGMQ), E402, and R469. Active-site residues include H514 and E516.

The protein belongs to the CTP synthase family. As to quaternary structure, homotetramer.

It carries out the reaction UTP + L-glutamine + ATP + H2O = CTP + L-glutamate + ADP + phosphate + 2 H(+). The catalysed reaction is L-glutamine + H2O = L-glutamate + NH4(+). It catalyses the reaction UTP + NH4(+) + ATP = CTP + ADP + phosphate + 2 H(+). It participates in pyrimidine metabolism; CTP biosynthesis via de novo pathway; CTP from UDP: step 2/2. With respect to regulation, allosterically activated by GTP, when glutamine is the substrate; GTP has no effect on the reaction when ammonia is the substrate. The allosteric effector GTP functions by stabilizing the protein conformation that binds the tetrahedral intermediate(s) formed during glutamine hydrolysis. Inhibited by the product CTP, via allosteric rather than competitive inhibition. Functionally, catalyzes the ATP-dependent amination of UTP to CTP with either L-glutamine or ammonia as the source of nitrogen. Regulates intracellular CTP levels through interactions with the four ribonucleotide triphosphates. The protein is CTP synthase of Chromohalobacter salexigens (strain ATCC BAA-138 / DSM 3043 / CIP 106854 / NCIMB 13768 / 1H11).